Consider the following 512-residue polypeptide: Kynurenine 3-monooxygenase (512 aa).

The protein belongs to the aromatic-ring hydroxylase family. KMO subfamily. FAD is required as a cofactor.

Its subcellular location is the mitochondrion outer membrane. It catalyses the reaction L-kynurenine + NADPH + O2 + H(+) = 3-hydroxy-L-kynurenine + NADP(+) + H2O. Its pathway is cofactor biosynthesis; NAD(+) biosynthesis; quinolinate from L-kynurenine: step 1/3. Its function is as follows. Catalyzes the hydroxylation of L-kynurenine (L-Kyn) to form 3-hydroxy-L-kynurenine (L-3OHKyn). Required for synthesis of quinolinic acid. This chain is Kynurenine 3-monooxygenase (bna4), found in Neosartorya fischeri (strain ATCC 1020 / DSM 3700 / CBS 544.65 / FGSC A1164 / JCM 1740 / NRRL 181 / WB 181) (Aspergillus fischerianus).